Reading from the N-terminus, the 162-residue chain is Nucleotide-binding protein Francci3_0558 (162 aa).

It belongs to the YajQ family.

Its function is as follows. Nucleotide-binding protein. The sequence is that of Nucleotide-binding protein Francci3_0558 from Frankia casuarinae (strain DSM 45818 / CECT 9043 / HFP020203 / CcI3).